The primary structure comprises 37 residues: Large ribosomal subunit protein bL36 (37 aa).

Belongs to the bacterial ribosomal protein bL36 family.

This Ureaplasma parvum serovar 3 (strain ATCC 27815 / 27 / NCTC 11736) protein is Large ribosomal subunit protein bL36.